A 324-amino-acid polypeptide reads, in one-letter code: Methionyl-tRNA formyltransferase (324 aa).

A (6S)-5,6,7,8-tetrahydrofolate-binding site is contributed by 114–117; sequence SLLP.

Belongs to the Fmt family.

The catalysed reaction is L-methionyl-tRNA(fMet) + (6R)-10-formyltetrahydrofolate = N-formyl-L-methionyl-tRNA(fMet) + (6S)-5,6,7,8-tetrahydrofolate + H(+). Its function is as follows. Attaches a formyl group to the free amino group of methionyl-tRNA(fMet). The formyl group appears to play a dual role in the initiator identity of N-formylmethionyl-tRNA by promoting its recognition by IF2 and preventing the misappropriation of this tRNA by the elongation apparatus. The chain is Methionyl-tRNA formyltransferase from Phocaeicola vulgatus (strain ATCC 8482 / DSM 1447 / JCM 5826 / CCUG 4940 / NBRC 14291 / NCTC 11154) (Bacteroides vulgatus).